We begin with the raw amino-acid sequence, 130 residues long: ATP synthase epsilon chain (130 aa).

The protein belongs to the ATPase epsilon chain family. In terms of assembly, F-type ATPases have 2 components, CF(1) - the catalytic core - and CF(0) - the membrane proton channel. CF(1) has five subunits: alpha(3), beta(3), gamma(1), delta(1), epsilon(1). CF(0) has three main subunits: a, b and c.

The protein resides in the cell membrane. Produces ATP from ADP in the presence of a proton gradient across the membrane. The polypeptide is ATP synthase epsilon chain (atpC) (Mycoplasmoides gallisepticum (strain R(low / passage 15 / clone 2)) (Mycoplasma gallisepticum)).